Here is a 146-residue protein sequence, read N- to C-terminus: Hemoglobin subunit beta (146 aa).

Residue valine 1 is modified to N-acetylvaline. Residues 2-146 form the Globin domain; sequence HLTAEEKSAV…VANALAHKYH (145 aa). The residue at position 12 (threonine 12) is a Phosphothreonine. At lysine 59 the chain carries N6-acetyllysine. Histidine 63 is a binding site for heme b. Lysine 82 carries the post-translational modification N6-acetyllysine. Histidine 92 provides a ligand contact to heme b. Cysteine 93 carries the post-translational modification S-nitrosocysteine. Residue lysine 144 is modified to N6-acetyllysine.

Belongs to the globin family. Heterotetramer of two alpha chains and two beta chains. In terms of tissue distribution, red blood cells.

Its function is as follows. Involved in oxygen transport from the lung to the various peripheral tissues. This chain is Hemoglobin subunit beta (HBB), found in Balaenoptera acutorostrata (Common minke whale).